A 1352-amino-acid polypeptide reads, in one-letter code: Patatin-like phospholipase domain-containing protein 7 (1352 aa).

Over 1-36 the chain is Lumenal; sequence MQNEEDACLEAGYCLGTTLSSWRLHFMEEQSQSTML. Residues 37-57 traverse the membrane as a helical segment; sequence MGIGIGALLTLAFVGITFFFV. Residues 58 to 1352 lie on the Cytoplasmic side of the membrane; sequence YRRVRRLRRA…DQGPRLEHPS (1295 aa). Residue 170 to 297 participates in a nucleoside 3',5'-cyclic phosphate binding; it reads VLGHFEKPLF…VRVVQIIMVR (128 aa). The segment at 340-364 is disordered; the sequence is MSYGPEEQLERSLRPSEFSSSDHGS. Ser341 and Ser379 each carry phosphoserine. Residues 384–411 form a disordered region; the sequence is SNHGEVDELRQSQGSGSNTSAFQESHEG. The segment covering 394–406 has biased composition (polar residues); it reads QSQGSGSNTSAFQ. A nucleoside 3',5'-cyclic phosphate is bound by residues 499 to 585 and 613 to 718; these read FLHV…YEIM and ALDW…LGEK. The segment at 681 to 967 is involved in the binding to lipid droplets; it reads VHAVRDSELA…RGCAQVGILR (287 aa). Positions 950 to 1116 constitute a PNPLA domain; that stretch reads LVLGGGGARG…INNLPADVAR (167 aa). The short motif at 954 to 959 is the GXGXXG element; sequence GGGARG. The GXSXG signature appears at 981–985; it reads GTSIG. Ser983 functions as the Nucleophile in the catalytic mechanism. Asp1103 acts as the Proton acceptor in catalysis. The short motif at 1103 to 1105 is the DGA/G element; sequence DGG. Ser1280 carries the post-translational modification Phosphoserine. Residue Thr1284 is modified to Phosphothreonine. The disordered stretch occupies residues 1295-1352; it reads KETYADFQSTGIELDSDSEYEPSMLQGPPSLTSPEQSQDSFPWLPNQDDQGPRLEHPS. A compositionally biased stretch (polar residues) spans 1323–1334; it reads PSLTSPEQSQDS.

The protein belongs to the NTE family. As to expression, expressed in white and brown adipose tissue, cardiac muscle, skeletal muscle, and testis. In terms of tissue distribution, expressed in white adipose tissue, cardiac muscle, skeletal muscle, and testis.

It is found in the endoplasmic reticulum membrane. The protein localises to the lipid droplet. It carries out the reaction a 1-acyl-sn-glycero-3-phosphocholine + H2O = sn-glycerol 3-phosphocholine + a fatty acid + H(+). The catalysed reaction is 1-(9Z-octadecenoyl)-sn-glycero-3-phosphocholine + H2O = sn-glycerol 3-phosphocholine + (9Z)-octadecenoate + H(+). It catalyses the reaction 1-(9Z-octadecenoyl)-sn-glycero-3-phosphoethanolamine + H2O = sn-glycero-3-phosphoethanolamine + (9Z)-octadecenoate + H(+). The enzyme catalyses 1-(9Z-octadecenoyl)-sn-glycero-3-phospho-L-serine + H2O = sn-glycero-3-phospho-L-serine + (9Z)-octadecenoate + H(+). It carries out the reaction 1-hexadecanoyl-sn-glycero-3-phosphocholine + H2O = sn-glycerol 3-phosphocholine + hexadecanoate + H(+). The catalysed reaction is 1-hexadecanoyl-sn-glycero-3-phosphate + H2O = sn-glycerol 3-phosphate + hexadecanoate + H(+). CAMP does not regulate lysophospholipase activity in vitro. Slightly inhibited by organophosphorus (OP) compounds such as mipafox, which is likely why mice are less sensitive to distal axonophathy induced by OPs compared to humans. In terms of biological role, lysophospholipase which preferentially deacylates unsaturated lysophosphatidylcholine (C18:1), generating glycerophosphocholine. Can also deacylate, to a lesser extent, lysophosphatidylethanolamine (C18:1), lysophosphatidyl-L-serine (C18:1) and lysophosphatidic acid (C16:0). Functionally, lysophospholipase. Lacks lysophospholipase activity. The polypeptide is Patatin-like phospholipase domain-containing protein 7 (Pnpla7) (Mus musculus (Mouse)).